The sequence spans 323 residues: Sphingolipid delta(4)-desaturase DES1 (323 aa).

The N-myristoyl glycine moiety is linked to residue Gly2. 2 helical membrane-spanning segments follow: residues 41-61 and 68-88; these read HNLI…FYLV and WVIF…TLAI. A Histidine box-1 motif is present at residues 89–93; sequence HEISH. The helical transmembrane segment at 104-124 threads the bilayer; it reads WNRWFGMFANLSLGVPYSISF. Residues 128–132 carry the Histidine box-2 motif; sequence HMDHH. 3 consecutive transmembrane segments (helical) span residues 152 to 172, 184 to 204, and 209 to 229; these read FFCT…FYAF, YLEI…YYVF, and LVYM…SGHF. Residues 259–263 carry the Histidine box-3 motif; the sequence is HNEHH. Ser307 is subject to Phosphoserine.

Belongs to the fatty acid desaturase type 1 family. DEGS subfamily. In terms of assembly, interacts with RLBP1; the interaction increases synthesis of chromophore-precursors by DEGS1. In terms of processing, myristoylation can target the enzyme to the mitochondria leading to an increase in ceramide levels. Detected in testis. Detected in pachytene spermatocytes and round spermatids. Expressed in retina and retinal pigment epithelium by Mueller cells (at protein level).

The protein resides in the mitochondrion membrane. The protein localises to the endoplasmic reticulum membrane. The catalysed reaction is an N-acylsphinganine + 2 Fe(II)-[cytochrome b5] + O2 + 2 H(+) = an N-acylsphing-4-enine + 2 Fe(III)-[cytochrome b5] + 2 H2O. It carries out the reaction all-trans-retinol = 11-cis-retinol. It catalyses the reaction all-trans-retinol = 9-cis-retinol. The enzyme catalyses all-trans-retinol = 13-cis-retinol. The catalysed reaction is 11-cis-retinol = 13-cis-retinol. It carries out the reaction 11-cis-retinol = 9-cis-retinol. Its function is as follows. Has sphingolipid-delta-4-desaturase activity. Converts D-erythro-sphinganine to D-erythro-sphingosine (E-sphing-4-enine). Catalyzes the equilibrium isomerization of retinols. The sequence is that of Sphingolipid delta(4)-desaturase DES1 from Mus musculus (Mouse).